Consider the following 672-residue polypeptide: DNA ligase (672 aa).

NAD(+) contacts are provided by residues 34–38, 83–84, and glutamate 117; these read DAEYD and SL. Residue lysine 119 is the N6-AMP-lysine intermediate of the active site. NAD(+) is bound by residues arginine 140, glutamate 177, lysine 293, and lysine 317. 4 residues coordinate Zn(2+): cysteine 411, cysteine 414, cysteine 429, and cysteine 434. The BRCT domain occupies 591–672; that stretch reads RVGGRFTGKT…FLAMLGVCRT (82 aa).

It belongs to the NAD-dependent DNA ligase family. LigA subfamily. Mg(2+) is required as a cofactor. The cofactor is Mn(2+).

The enzyme catalyses NAD(+) + (deoxyribonucleotide)n-3'-hydroxyl + 5'-phospho-(deoxyribonucleotide)m = (deoxyribonucleotide)n+m + AMP + beta-nicotinamide D-nucleotide.. In terms of biological role, DNA ligase that catalyzes the formation of phosphodiester linkages between 5'-phosphoryl and 3'-hydroxyl groups in double-stranded DNA using NAD as a coenzyme and as the energy source for the reaction. It is essential for DNA replication and repair of damaged DNA. The sequence is that of DNA ligase from Geotalea uraniireducens (strain Rf4) (Geobacter uraniireducens).